The primary structure comprises 368 residues: DNA-directed RNA polymerase subunit alpha (368 aa).

The alpha N-terminal domain (alpha-NTD) stretch occupies residues M1–E231. The segment at K243 to F368 is alpha C-terminal domain (alpha-CTD).

This sequence belongs to the RNA polymerase alpha chain family. Homodimer. The RNAP catalytic core consists of 2 alpha, 1 beta, 1 beta' and 1 omega subunit. When a sigma factor is associated with the core the holoenzyme is formed, which can initiate transcription.

It catalyses the reaction RNA(n) + a ribonucleoside 5'-triphosphate = RNA(n+1) + diphosphate. DNA-dependent RNA polymerase catalyzes the transcription of DNA into RNA using the four ribonucleoside triphosphates as substrates. The chain is DNA-directed RNA polymerase subunit alpha from Koribacter versatilis (strain Ellin345).